A 349-amino-acid polypeptide reads, in one-letter code: Autophagy-related protein 3 (349 aa).

A flexible region region spans residues 95–173 (ALVNDGDDFK…IRDSGADSKN (79 aa)). C244 (glycyl thioester intermediate) is an active-site residue. Residues 248–325 (SVMKTLLDRA…DQEVAIRVDQ (78 aa)) are handle region. The ATG8 interaction motif (AIM) signature appears at 306-309 (WEEV).

This sequence belongs to the ATG3 family. In terms of assembly, monomer. Interacts with ATG8 through an intermediate thioester bond between Cys-244 and the C-terminal Gly of ATG8. Interacts with the C-terminal region of the E1-like ATG7 enzyme. Also interacts with the ATG12-ATG5 conjugate.

It localises to the cytoplasm. In terms of biological role, E2 conjugating enzyme required for the cytoplasm to vacuole transport (Cvt) and autophagy. Required for selective autophagic degradation of the nucleus (nucleophagy) as well as for mitophagy which contributes to regulate mitochondrial quantity and quality by eliminating the mitochondria to a basal level to fulfill cellular energy requirements and preventing excess ROS production. Responsible for the E2-like covalent binding of phosphatidylethanolamine to the C-terminal Gly of ATG8. The ATG12-ATG5 conjugate plays a role of an E3 and promotes the transfer of ATG8 from ATG3 to phosphatidylethanolamine (PE). This step is required for the membrane association of ATG8. The formation of the ATG8-phosphatidylethanolamine conjugate is essential for autophagy and for the cytoplasm to vacuole transport (Cvt). The ATG8-PE conjugate mediates tethering between adjacent membranes and stimulates membrane hemifusion, leading to expansion of the autophagosomal membrane during autophagy. Autophagy is required for proper vegetative growth, asexual/sexual reproduction, and full virulence. Autophagy is particularly involved in the biosynthesis of deoxynivalenol (DON), an important virulence determinant. The sequence is that of Autophagy-related protein 3 from Gibberella zeae (strain ATCC MYA-4620 / CBS 123657 / FGSC 9075 / NRRL 31084 / PH-1) (Wheat head blight fungus).